Here is a 131-residue protein sequence, read N- to C-terminus: Sperm microtubule inner protein 11 (131 aa).

A disordered region spans residues 17–44 (SKKRDKTEETNQKDPVPTRLPPIFSEDG).

In terms of assembly, microtubule inner protein component of sperm flagellar doublet microtubules. Expressed in sperm.

It is found in the cytoplasm. The protein resides in the cytoskeleton. Its subcellular location is the flagellum axoneme. Microtubule inner protein (MIP) part of the dynein-decorated doublet microtubules (DMTs) in flagellum axoneme. May serve to reinforce and thus stabilize the microtubule structure in the sperm flagella. The polypeptide is Sperm microtubule inner protein 11 (SPMIP11) (Bos taurus (Bovine)).